The following is a 112-amino-acid chain: T cell receptor alpha variable 41 (112 aa).

Residues 1 to 21 (MVKIRQFLLAILWLQLSCVSA) form the signal peptide. The Ig-like domain maps to 24 to 112 (NEVEQSPQNL…DSAVYICAVR (89 aa)). N-linked (GlcNAc...) asparagine glycosylation is found at Asn32 and Asn44. Residues Cys45 and Cys109 are joined by a disulfide bond.

Alpha-beta TR is a heterodimer composed of an alpha and beta chain; disulfide-linked. The alpha-beta TR is associated with the transmembrane signaling CD3 coreceptor proteins to form the TR-CD3 (TcR or TCR). The assembly of alpha-beta TR heterodimers with CD3 occurs in the endoplasmic reticulum where a single alpha-beta TR heterodimer associates with one CD3D-CD3E heterodimer, one CD3G-CD3E heterodimer and one CD247 homodimer forming a stable octameric structure. CD3D-CD3E and CD3G-CD3E heterodimers preferentially associate with TR alpha and TR beta chains, respectively. The association of the CD247 homodimer is the last step of TcR assembly in the endoplasmic reticulum and is required for transport to the cell surface.

It localises to the cell membrane. V region of the variable domain of T cell receptor (TR) alpha chain that participates in the antigen recognition. Alpha-beta T cell receptors are antigen specific receptors which are essential to the immune response and are present on the cell surface of T lymphocytes. Recognize peptide-major histocompatibility (MH) (pMH) complexes that are displayed by antigen presenting cells (APC), a prerequisite for efficient T cell adaptive immunity against pathogens. Binding of alpha-beta TR to pMH complex initiates TR-CD3 clustering on the cell surface and intracellular activation of LCK that phosphorylates the ITAM motifs of CD3G, CD3D, CD3E and CD247 enabling the recruitment of ZAP70. In turn ZAP70 phosphorylates LAT, which recruits numerous signaling molecules to form the LAT signalosome. The LAT signalosome propagates signal branching to three major signaling pathways, the calcium, the mitogen-activated protein kinase (MAPK) kinase and the nuclear factor NF-kappa-B (NF-kB) pathways, leading to the mobilization of transcription factors that are critical for gene expression and essential for T cell growth and differentiation. The T cell repertoire is generated in the thymus, by V-(D)-J rearrangement. This repertoire is then shaped by intrathymic selection events to generate a peripheral T cell pool of self-MH restricted, non-autoaggressive T cells. Post-thymic interaction of alpha-beta TR with the pMH complexes shapes TR structural and functional avidity. The protein is T cell receptor alpha variable 41 of Homo sapiens (Human).